The chain runs to 348 residues: D-alanine--D-alanine ligase (348 aa).

In terms of domain architecture, ATP-grasp spans 132–334; it reads KRILEVAGVP…YSDIIKELVV (203 aa). 162 to 217 is an ATP binding site; it reads LEKLTFPVFVKPANMGSSVGISKAENESELRSAIDLALKYDSRILIEQGVVAREIE. Aspartate 288, glutamate 301, and asparagine 303 together coordinate Mg(2+).

The protein belongs to the D-alanine--D-alanine ligase family. It depends on Mg(2+) as a cofactor. Mn(2+) is required as a cofactor.

The protein resides in the cytoplasm. The enzyme catalyses 2 D-alanine + ATP = D-alanyl-D-alanine + ADP + phosphate + H(+). The protein operates within cell wall biogenesis; peptidoglycan biosynthesis. Cell wall formation. This chain is D-alanine--D-alanine ligase, found in Streptococcus thermophilus (strain CNRZ 1066).